The following is a 394-amino-acid chain: Glycogen synthase kinase 1 (394 aa).

The Protein kinase domain maps to 35–318; sequence YTQCKIVGNG…AIDAMVHPFF (284 aa). Residues 41–49 and K64 contribute to the ATP site; that span reads VGNGSFGVV.

It belongs to the protein kinase superfamily. CMGC Ser/Thr protein kinase family. GSK-3 subfamily.

The protein localises to the cytoplasm. It carries out the reaction L-seryl-[protein] + ATP = O-phospho-L-seryl-[protein] + ADP + H(+). Its function is as follows. Protein kinase that acts downstream of the MPS1 MAPK cascade as a highly conservative signal modulator that dictates growth, conidiation and pathogenicity. Phosphorylates HAT1 at 'Ser-8' to block its translocation from the nucleus to the cytoplasm where HAT1 positively regulates appressorium development and pathogenicity. This is Glycogen synthase kinase 1 from Pyricularia oryzae (Rice blast fungus).